Consider the following 52-residue polypeptide: Defensin-like protein 2B (52 aa).

Cystine bridges form between Cys4/Cys52, Cys16/Cys37, Cys22/Cys46, and Cys26/Cys48.

In terms of assembly, forms oligomers in its native state.

Functionally, possesses antifungal activity sensitive to inorganic cations. The sequence is that of Defensin-like protein 2B from Sinapis alba (White mustard).